The sequence spans 73 residues: Sec-independent protein translocase protein TatA (73 aa).

The helical transmembrane segment at 1–21 threads the bilayer; the sequence is MGSFSIWHWVIVLVVVVLIFG. A disordered region spans residues 43-73; it reads MKSEGEDAAQTPPAAQKEGGRVIDAEPADKK. Residues 60 to 73 show a composition bias toward basic and acidic residues; the sequence is EGGRVIDAEPADKK.

It belongs to the TatA/E family. The Tat system comprises two distinct complexes: a TatABC complex, containing multiple copies of TatA, TatB and TatC subunits, and a separate TatA complex, containing only TatA subunits. Substrates initially bind to the TatABC complex, which probably triggers association of the separate TatA complex to form the active translocon.

Its subcellular location is the cell inner membrane. In terms of biological role, part of the twin-arginine translocation (Tat) system that transports large folded proteins containing a characteristic twin-arginine motif in their signal peptide across membranes. TatA could form the protein-conducting channel of the Tat system. In Laribacter hongkongensis (strain HLHK9), this protein is Sec-independent protein translocase protein TatA.